A 477-amino-acid polypeptide reads, in one-letter code: Glutamate--tRNA ligase (477 aa).

The 'HIGH' region motif lies at 8 to 18; the sequence is PSPTGTLHIGT. The 'KMSKS' region signature appears at 247 to 251; it reads KLSKR. K250 serves as a coordination point for ATP.

Belongs to the class-I aminoacyl-tRNA synthetase family. Glutamate--tRNA ligase type 1 subfamily. In terms of assembly, monomer.

Its subcellular location is the cytoplasm. The catalysed reaction is tRNA(Glu) + L-glutamate + ATP = L-glutamyl-tRNA(Glu) + AMP + diphosphate. Catalyzes the attachment of glutamate to tRNA(Glu) in a two-step reaction: glutamate is first activated by ATP to form Glu-AMP and then transferred to the acceptor end of tRNA(Glu). The chain is Glutamate--tRNA ligase from Parasynechococcus marenigrum (strain WH8102).